The following is a 312-amino-acid chain: Ornithine carbamoyltransferase (312 aa).

Residues 60-63 (STRT), Q87, R111, and 138-141 (HPCQ) contribute to the carbamoyl phosphate site. L-ornithine-binding positions include N169, D229, and 233-234 (SM). Carbamoyl phosphate-binding positions include 268 to 269 (CL) and R296.

It belongs to the aspartate/ornithine carbamoyltransferase superfamily. OTCase family.

The protein localises to the cytoplasm. It carries out the reaction carbamoyl phosphate + L-ornithine = L-citrulline + phosphate + H(+). It functions in the pathway amino-acid biosynthesis; L-arginine biosynthesis; L-arginine from L-ornithine and carbamoyl phosphate: step 1/3. Its function is as follows. Reversibly catalyzes the transfer of the carbamoyl group from carbamoyl phosphate (CP) to the N(epsilon) atom of ornithine (ORN) to produce L-citrulline. This chain is Ornithine carbamoyltransferase, found in Rhodopseudomonas palustris (strain BisA53).